The primary structure comprises 104 residues: L-rhamnose mutarotase (104 aa).

Residue Y18 coordinates substrate. Residue H22 is the Proton donor of the active site. Substrate is bound by residues Y41 and W76–W77.

The protein belongs to the rhamnose mutarotase family. Homodimer.

Its subcellular location is the cytoplasm. The catalysed reaction is alpha-L-rhamnose = beta-L-rhamnose. It functions in the pathway carbohydrate metabolism; L-rhamnose metabolism. Functionally, involved in the anomeric conversion of L-rhamnose. In Sinorhizobium medicae (strain WSM419) (Ensifer medicae), this protein is L-rhamnose mutarotase.